Consider the following 335-residue polypeptide: Trans-3-hydroxy-L-proline dehydratase (335 aa).

Cysteine 91 serves as the catalytic Proton acceptor. Substrate-binding positions include 92-93 (GH) and 256-257 (GS).

The protein belongs to the proline racemase family. Homodimer.

The enzyme catalyses trans-3-hydroxy-L-proline = 1-pyrroline-2-carboxylate + H2O. It participates in amino-acid degradation. Catalyzes the dehydration of trans-3-hydroxy-L-proline (t3LHyp) to Delta(1)-pyrroline-2-carboxylate (Pyr2C). Together with LhpI, is involved in a t3LHyp degradation pathway to L-proline, which allows A.brasilense to grow on t3LHyp as a sole carbon source. The protein is Trans-3-hydroxy-L-proline dehydratase of Azospirillum brasilense.